A 127-amino-acid chain; its full sequence is Small ribosomal subunit protein uS11 (127 aa).

The protein belongs to the universal ribosomal protein uS11 family. In terms of assembly, part of the 30S ribosomal subunit. Interacts with proteins S7 and S18. Binds to IF-3.

In terms of biological role, located on the platform of the 30S subunit, it bridges several disparate RNA helices of the 16S rRNA. Forms part of the Shine-Dalgarno cleft in the 70S ribosome. The polypeptide is Small ribosomal subunit protein uS11 (Rhodopirellula baltica (strain DSM 10527 / NCIMB 13988 / SH1)).